Here is a 210-residue protein sequence, read N- to C-terminus: Probable GTP-binding protein EngB (210 aa).

An EngB-type G domain is found at 27-201 (MGIEVAFAGR…HQKLDIWFSQ (175 aa)). GTP-binding positions include 35-42 (GRSNAGKS), 62-66 (GRTQL), 80-83 (DLPG), 147-150 (TKAD), and 180-182 (FSV). 2 residues coordinate Mg(2+): Ser42 and Thr64.

Belongs to the TRAFAC class TrmE-Era-EngA-EngB-Septin-like GTPase superfamily. EngB GTPase family. It depends on Mg(2+) as a cofactor.

Its function is as follows. Necessary for normal cell division and for the maintenance of normal septation. This is Probable GTP-binding protein EngB from Photorhabdus laumondii subsp. laumondii (strain DSM 15139 / CIP 105565 / TT01) (Photorhabdus luminescens subsp. laumondii).